Consider the following 149-residue polypeptide: MSKAMEKRRAARKLALQALYQWRVAGASISQIEAEFAVDNDLQQVDRDLFKAVLYGVPSSVSELDALLQPFVDRKLTDVDPVELSLIRMGAFELRSRIEVPYRVVINEAVELAKQFGGTDGHKFVNSVLDKLAPQLRQAEVAAAKSKKK.

It belongs to the NusB family.

Involved in transcription antitermination. Required for transcription of ribosomal RNA (rRNA) genes. Binds specifically to the boxA antiterminator sequence of the ribosomal RNA (rrn) operons. This is Transcription antitermination protein NusB from Hahella chejuensis (strain KCTC 2396).